Here is a 495-residue protein sequence, read N- to C-terminus: MVTKTSFLSFEISELVKKNVGYITQIIGPVLDVASSPGKMPNIYNSLIIKGQNPAGQEINVTCEVQQLLGNNEVRAVAMSATDGLTRGMGAVDTGAPLSVPVGETTLGRISNVLGEPVDNLGPVQSSTTFPIHRSAPAFIQLDTKLSIFETGIKVVDLLAPYRRGGKIGLFGGAGVGKTVLIMELINNIAKAHGGVSVSGGVGERTREGNDPYMEMKESKVINEENISESKVALVYGQMNEPPGARMRVGSTASTMAEYFRDVNKQDVLPFIDNILRFVQAGSEVSALLGRMPSAVGYQPTLGTEMGSSQERITSTKDGSITSIQAVYVPADDLTDPAPATTSAHLDATTVLSRGLAAKGIYPAVDPLDSTSTMSQPWIVGEEHYETAQGVKQTSQRYKELQDIIAILGLDELSEEDRQTVARARKIERFSSQPSFVAEVFTGSPGKYVSLSETIKGFQMILPGELDNLPEQAFYLVGNIDEATAKAAALQVEGQ.

172–179 is a binding site for ATP; it reads GGAGVGKT.

This sequence belongs to the ATPase alpha/beta chains family. As to quaternary structure, F-type ATPases have 2 components, CF(1) - the catalytic core - and CF(0) - the membrane proton channel. CF(1) has five subunits: alpha(3), beta(3), gamma(1), delta(1), epsilon(1). CF(0) has four main subunits: a(1), b(1), b'(1) and c(9-12).

The protein localises to the plastid. The protein resides in the chloroplast thylakoid membrane. The catalysed reaction is ATP + H2O + 4 H(+)(in) = ADP + phosphate + 5 H(+)(out). Its function is as follows. Produces ATP from ADP in the presence of a proton gradient across the membrane. The catalytic sites are hosted primarily by the beta subunits. This Pteridium aquilinum (Bracken fern) protein is ATP synthase subunit beta, chloroplastic.